The sequence spans 186 residues: Ribosome-recycling factor (186 aa).

Belongs to the RRF family.

The protein localises to the cytoplasm. In terms of biological role, responsible for the release of ribosomes from messenger RNA at the termination of protein biosynthesis. May increase the efficiency of translation by recycling ribosomes from one round of translation to another. The sequence is that of Ribosome-recycling factor from Ralstonia pickettii (strain 12J).